A 116-amino-acid chain; its full sequence is Protein Wnt-5(I) (116 aa).

S1 carries O-palmitoleoyl serine; by PORCN lipidation. N-linked (GlcNAc...) asparagine glycosylation is present at N69. Cysteines 82 and 97 form a disulfide.

It belongs to the Wnt family. Palmitoleoylation is required for efficient binding to frizzled receptors. Depalmitoleoylation leads to Wnt signaling pathway inhibition.

The protein resides in the secreted. It is found in the extracellular space. The protein localises to the extracellular matrix. In terms of biological role, ligand for members of the frizzled family of seven transmembrane receptors. Probable developmental protein. May be a signaling molecule which affects the development of discrete regions of tissues. Is likely to signal over only few cell diameters. This chain is Protein Wnt-5(I) (WNT-5(I)), found in Eptatretus stoutii (Pacific hagfish).